A 222-amino-acid chain; its full sequence is Pectate lyase A (222 aa).

Positions Met1 to Ala25 are cleaved as a signal peptide.

Belongs to the polysaccharide lyase 3 family. It depends on Ca(2+) as a cofactor.

The protein resides in the secreted. The enzyme catalyses Eliminative cleavage of (1-&gt;4)-alpha-D-galacturonan to give oligosaccharides with 4-deoxy-alpha-D-galact-4-enuronosyl groups at their non-reducing ends.. It catalyses the reaction Eliminative cleavage of (1-&gt;4)-alpha-D-galacturonan methyl ester to give oligosaccharides with 4-deoxy-6-O-methyl-alpha-D-galact-4-enuronosyl groups at their non-reducing ends.. The protein operates within glycan metabolism; pectin degradation; 2-dehydro-3-deoxy-D-gluconate from pectin: step 2/5. Its activity is regulated as follows. Strongly inhibited by Ba(2+). To a lesser extent, is also inhibited by Sn(2+), Mg(2+) and Ag(+). Inhibited by EDTA in vitro. Functionally, catalyzes the depolymerization of both polygalacturonate and pectins of methyl esterification degree from 22 to 89%, with an endo mode of action. In contrast to the majority of pectate lyases, displays high activity on highly methylated pectins. Is not able to cleave trigalacturonate. Does not degrade xylans and carboxymethylcellulose (CMC). The protein is Pectate lyase A (pelA) of Paenibacillus barcinonensis.